The following is a 202-amino-acid chain: Superoxide dismutase [Mn/Fe] (202 aa).

4 residues coordinate Fe(3+): His-27, His-81, Asp-163, and His-167. The Mn(2+) site is built by His-27, His-81, Asp-163, and His-167.

It belongs to the iron/manganese superoxide dismutase family. Requires Mn(2+) as cofactor. It depends on Fe(3+) as a cofactor.

It catalyses the reaction 2 superoxide + 2 H(+) = H2O2 + O2. Functionally, destroys superoxide anion radicals which are normally produced within the cells and which are toxic to biological systems. Catalyzes the dismutation of superoxide anion radicals into O2 and H2O2 by successive reduction and oxidation of the transition metal ion at the active site. This chain is Superoxide dismutase [Mn/Fe] (sodA), found in Streptococcus agalactiae serotype V (strain ATCC BAA-611 / 2603 V/R).